The following is a 776-amino-acid chain: Homoaconitase, mitochondrial (776 aa).

Residues 1–38 constitute a mitochondrion transit peptide; that stretch reads MQSRLVSQSGLGRRWAVLRCALSKTYQRRTLTSTRRQF. The [4Fe-4S] cluster site is built by cysteine 394, cysteine 463, and cysteine 466.

It belongs to the aconitase/IPM isomerase family. It depends on [4Fe-4S] cluster as a cofactor.

It localises to the mitochondrion. The catalysed reaction is (2R,3S)-homoisocitrate = cis-homoaconitate + H2O. The protein operates within amino-acid biosynthesis; L-lysine biosynthesis via AAA pathway; L-alpha-aminoadipate from 2-oxoglutarate: step 3/5. Functionally, catalyzes the reversible hydration of cis-homoaconitate to (2R,3S)-homoisocitrate, a step in the alpha-aminoadipate pathway for lysine biosynthesis. This Emericella nidulans (strain FGSC A4 / ATCC 38163 / CBS 112.46 / NRRL 194 / M139) (Aspergillus nidulans) protein is Homoaconitase, mitochondrial (lys4).